A 207-amino-acid polypeptide reads, in one-letter code: Infectivity protein P11 (207 aa).

A helical membrane pass occupies residues 13–28 (WWIVAAIGGLAAFLLL). The stretch at 64-95 (AALQANTQLSAQNAQLQAQMDASRLQLETQLN) forms a coiled coil.

Its subcellular location is the virion membrane. Functionally, component of the phage ejection machinery. Pilot protein for the formation of the tube that conducts the genome into the target cell. Probably involved in penetration of the bacterial outer membrane and for making the peptidoglycan layer accessible to the viral transglycosylase. Essential for viral infectivity. The protein is Infectivity protein P11 (XI) of Enterobacteria phage PRD1 (Bacteriophage PRD1).